Consider the following 399-residue polypeptide: Methylthioribose kinase (399 aa).

Residues asparagine 40, lysine 57, and 111–113 each bind ATP; that span reads EDL. Residue aspartate 229 participates in substrate binding. Position 246-248 (246-248) interacts with ATP; the sequence is DAE. Arginine 344 provides a ligand contact to substrate.

It belongs to the methylthioribose kinase family. In terms of assembly, homodimer.

The catalysed reaction is 5-(methylsulfanyl)-D-ribose + ATP = 5-(methylsulfanyl)-alpha-D-ribose 1-phosphate + ADP + H(+). It functions in the pathway amino-acid biosynthesis; L-methionine biosynthesis via salvage pathway; S-methyl-5-thio-alpha-D-ribose 1-phosphate from S-methyl-5'-thioadenosine (hydrolase route): step 2/2. Catalyzes the phosphorylation of methylthioribose into methylthioribose-1-phosphate. The polypeptide is Methylthioribose kinase (Klebsiella pneumoniae (strain 342)).